Here is a 1464-residue protein sequence, read N- to C-terminus: Gag-Pol polyprotein (1464 aa).

A lipid anchor (N-myristoyl glycine; by host) is attached at glycine 2. Positions 7 to 31 (VLRGKKADELERIRLRPGGKKKYRL) are interaction with Gp41. The Nuclear export signal motif lies at 16–22 (LERIRLR). Residues 26 to 32 (KKKYRLK) carry the Nuclear localization signal motif. The interval 111–136 (ETGTAEKMPSTSRPTAPSSEKGGNYP) is disordered. Polar residues predominate over residues 119 to 128 (PSTSRPTAPS). The residue at position 135 (tyrosine 135) is a Phosphotyrosine; by host. Residues 191–228 (NCVGDHQAAMQIIREIINEEAAEWDVQHPIPGPLPAGQ) are interaction with human PPIA/CYPA and NUP153. A dimerization/Multimerization of capsid protein p24 region spans residues 279-365 (YNPTNILDIK…GGPGQKARLM (87 aa)). 2 CCHC-type zinc fingers span residues 389 to 406 (FKCWNCGKEGHSARQCRA) and 410 to 427 (QGCWKCGKPGHIMTNCPD). Residues 432-500 (FLRTGPLGKE…RGLTAPRAGG (69 aa)) are disordered. Residues 456–469 (TNSTPSGSSSGSTG) show a composition bias toward low complexity. The span at 473–485 (AAREKTERAERET) shows a compositional bias: basic and acidic residues. The dimerization of protease stretch occupies residues 514-518 (PQFSL). Positions 533–602 (VEVLLDTGAD…TPINIFGRNI (70 aa)) constitute a Peptidase A2 domain. Residue aspartate 538 is the For protease activity; shared with dimeric partner of the active site. Dimerization of protease stretches follow at residues 562 to 568 (GIGGFIN) and 601 to 613 (NILTALGMSLNLP). A Reverse transcriptase domain is found at 656 to 846 (EGQLEEAPPT…PPYHWMGYEL (191 aa)). Aspartate 722, aspartate 797, and aspartate 798 together coordinate Mg(2+). The RT 'primer grip' stretch occupies residues 839-847 (YHWMGYELW). The Tryptophan repeat motif motif lies at 1009–1025 (WEQWWDNYWQVTWIPDW). The region spanning 1045-1168 (IPGAETFYTD…VDHLVSQGIR (124 aa)) is the RNase H type-1 domain. The Mg(2+) site is built by aspartate 1054, glutamate 1089, aspartate 1109, and aspartate 1160. The Integrase-type zinc-finger motif lies at 1174-1215 (EKIEPAQEEHEKYHSNVKELSHKFGIPNLVARQIVNSCAQCQ). Zn(2+) is bound by residues histidine 1183, histidine 1187, cysteine 1211, and cysteine 1214. In terms of domain architecture, Integrase catalytic spans 1224–1375 (QVNAELGTWQ…TPSERLINMI (152 aa)). Positions 1235, 1287, and 1323 each coordinate Mg(2+). The integrase-type DNA-binding region spans 1394–1441 (FRVYFREGRDQLWKGPGELLWKGEGAVLVKVGTDIKIIPRRKAKIIRD).

In terms of assembly, homotrimer; further assembles as hexamers of trimers. Interacts with gp41 (via C-terminus). Interacts with host CALM1; this interaction induces a conformational change in the Matrix protein, triggering exposure of the myristate group. Interacts with host AP3D1; this interaction allows the polyprotein trafficking to multivesicular bodies during virus assembly. Part of the pre-integration complex (PIC) which is composed of viral genome, matrix protein, Vpr and integrase. Homodimer; the homodimer further multimerizes as homohexamers or homopentamers. Interacts with human PPIA/CYPA. Interacts with human NUP153. Interacts with host PDZD8; this interaction stabilizes the capsid. Interacts with monkey TRIM5; this interaction destabilizes the capsid. As to quaternary structure, homodimer, whose active site consists of two apposed aspartic acid residues. In terms of assembly, heterodimer of p66 RT and p51 RT (RT p66/p51). Heterodimerization of RT is essential for DNA polymerase activity. The overall folding of the subdomains is similar in p66 RT and p51 RT but the spatial arrangements of the subdomains are dramatically different. Homotetramer; may further associate as a homohexadecamer. Part of the pre-integration complex (PIC) which is composed of viral genome, matrix protein, Vpr and integrase. Interacts with human SMARCB1/INI1 and human PSIP1/LEDGF isoform 1. Interacts with human KPNA3; this interaction might play a role in nuclear import of the pre-integration complex. Interacts with human NUP153; this interaction might play a role in nuclear import of the pre-integration complex. Mg(2+) is required as a cofactor. In terms of processing, specific enzymatic cleavages by the viral protease yield mature proteins. The protease is released by autocatalytic cleavage. The polyprotein is cleaved during and after budding, this process is termed maturation. Proteolytic cleavage of p66 RT removes the RNase H domain to yield the p51 RT subunit. Nucleocapsid protein p7 might be further cleaved after virus entry.

It localises to the host cell membrane. The protein localises to the host endosome. It is found in the host multivesicular body. The protein resides in the virion membrane. Its subcellular location is the host nucleus. It localises to the host cytoplasm. The protein localises to the virion. The enzyme catalyses Endopeptidase for which the P1 residue is preferably hydrophobic.. The catalysed reaction is Endohydrolysis of RNA in RNA/DNA hybrids. Three different cleavage modes: 1. sequence-specific internal cleavage of RNA. Human immunodeficiency virus type 1 and Moloney murine leukemia virus enzymes prefer to cleave the RNA strand one nucleotide away from the RNA-DNA junction. 2. RNA 5'-end directed cleavage 13-19 nucleotides from the RNA end. 3. DNA 3'-end directed cleavage 15-20 nucleotides away from the primer terminus.. It catalyses the reaction 3'-end directed exonucleolytic cleavage of viral RNA-DNA hybrid.. It carries out the reaction DNA(n) + a 2'-deoxyribonucleoside 5'-triphosphate = DNA(n+1) + diphosphate. Its activity is regulated as follows. Protease: The viral protease is inhibited by many synthetic protease inhibitors (PIs), such as amprenavir, atazanavir, indinavir, loprinavir, nelfinavir, ritonavir and saquinavir. Use of protease inhibitors in tritherapy regimens permit more ambitious therapeutic strategies. Reverse transcriptase/ribonuclease H: RT can be inhibited either by nucleoside RT inhibitors (NRTIs) or by non nucleoside RT inhibitors (NNRTIs). NRTIs act as chain terminators, whereas NNRTIs inhibit DNA polymerization by binding a small hydrophobic pocket near the RT active site and inducing an allosteric change in this region. Classical NRTIs are abacavir, adefovir (PMEA), didanosine (ddI), lamivudine (3TC), stavudine (d4T), tenofovir (PMPA), zalcitabine (ddC), and zidovudine (AZT). Classical NNRTIs are atevirdine (BHAP U-87201E), delavirdine, efavirenz (DMP-266), emivirine (I-EBU), and nevirapine (BI-RG-587). The tritherapies used as a basic effective treatment of AIDS associate two NRTIs and one NNRTI. Its function is as follows. Mediates, with Gag polyprotein, the essential events in virion assembly, including binding the plasma membrane, making the protein-protein interactions necessary to create spherical particles, recruiting the viral Env proteins, and packaging the genomic RNA via direct interactions with the RNA packaging sequence (Psi). Gag-Pol polyprotein may regulate its own translation, by the binding genomic RNA in the 5'-UTR. At low concentration, the polyprotein would promote translation, whereas at high concentration, the polyprotein would encapsidate genomic RNA and then shut off translation. Targets the polyprotein to the plasma membrane via a multipartite membrane-binding signal, that includes its myristoylated N-terminus. Matrix protein is part of the pre-integration complex. Implicated in the release from host cell mediated by Vpu. Binds to RNA. In terms of biological role, forms the conical core that encapsulates the genomic RNA-nucleocapsid complex in the virion. Most core are conical, with only 7% tubular. The core is constituted by capsid protein hexamer subunits. The core is disassembled soon after virion entry. Host restriction factors such as TRIM5-alpha or TRIMCyp bind retroviral capsids and cause premature capsid disassembly, leading to blocks in reverse transcription. Capsid restriction by TRIM5 is one of the factors which restricts HIV-1 to the human species. Host PIN1 apparently facilitates the virion uncoating. On the other hand, interactions with PDZD8 or CYPA stabilize the capsid. Functionally, encapsulates and protects viral dimeric unspliced genomic RNA (gRNA). Binds these RNAs through its zinc fingers. Acts as a nucleic acid chaperone which is involved in rearangement of nucleic acid secondary structure during gRNA retrotranscription. Also facilitates template switch leading to recombination. As part of the polyprotein, participates in gRNA dimerization, packaging, tRNA incorporation and virion assembly. Its function is as follows. Aspartyl protease that mediates proteolytic cleavages of Gag and Gag-Pol polyproteins during or shortly after the release of the virion from the plasma membrane. Cleavages take place as an ordered, step-wise cascade to yield mature proteins. This process is called maturation. Displays maximal activity during the budding process just prior to particle release from the cell. Also cleaves Nef and Vif, probably concomitantly with viral structural proteins on maturation of virus particles. Hydrolyzes host EIF4GI and PABP1 in order to shut off the capped cellular mRNA translation. The resulting inhibition of cellular protein synthesis serves to ensure maximal viral gene expression and to evade host immune response. Multifunctional enzyme that converts the viral RNA genome into dsDNA in the cytoplasm, shortly after virus entry into the cell. This enzyme displays a DNA polymerase activity that can copy either DNA or RNA templates, and a ribonuclease H (RNase H) activity that cleaves the RNA strand of RNA-DNA heteroduplexes in a partially processive 3' to 5' endonucleasic mode. Conversion of viral genomic RNA into dsDNA requires many steps. A tRNA(3)-Lys binds to the primer-binding site (PBS) situated at the 5'-end of the viral RNA. RT uses the 3' end of the tRNA primer to perform a short round of RNA-dependent minus-strand DNA synthesis. The reading proceeds through the U5 region and ends after the repeated (R) region which is present at both ends of viral RNA. The portion of the RNA-DNA heteroduplex is digested by the RNase H, resulting in a ssDNA product attached to the tRNA primer. This ssDNA/tRNA hybridizes with the identical R region situated at the 3' end of viral RNA. This template exchange, known as minus-strand DNA strong stop transfer, can be either intra- or intermolecular. RT uses the 3' end of this newly synthesized short ssDNA to perform the RNA-dependent minus-strand DNA synthesis of the whole template. RNase H digests the RNA template except for two polypurine tracts (PPTs) situated at the 5'-end and near the center of the genome. It is not clear if both polymerase and RNase H activities are simultaneous. RNase H probably can proceed both in a polymerase-dependent (RNA cut into small fragments by the same RT performing DNA synthesis) and a polymerase-independent mode (cleavage of remaining RNA fragments by free RTs). Secondly, RT performs DNA-directed plus-strand DNA synthesis using the PPTs that have not been removed by RNase H as primers. PPTs and tRNA primers are then removed by RNase H. The 3' and 5' ssDNA PBS regions hybridize to form a circular dsDNA intermediate. Strand displacement synthesis by RT to the PBS and PPT ends produces a blunt ended, linear dsDNA copy of the viral genome that includes long terminal repeats (LTRs) at both ends. In terms of biological role, catalyzes viral DNA integration into the host chromosome, by performing a series of DNA cutting and joining reactions. This enzyme activity takes place after virion entry into a cell and reverse transcription of the RNA genome in dsDNA. The first step in the integration process is 3' processing. This step requires a complex comprising the viral genome, matrix protein, Vpr and integrase. This complex is called the pre-integration complex (PIC). The integrase protein removes 2 nucleotides from each 3' end of the viral DNA, leaving recessed CA OH's at the 3' ends. In the second step, the PIC enters cell nucleus. This process is mediated through integrase and Vpr proteins, and allows the virus to infect a non dividing cell. This ability to enter the nucleus is specific of lentiviruses, other retroviruses cannot and rely on cell division to access cell chromosomes. In the third step, termed strand transfer, the integrase protein joins the previously processed 3' ends to the 5' ends of strands of target cellular DNA at the site of integration. The 5'-ends are produced by integrase-catalyzed staggered cuts, 5 bp apart. A Y-shaped, gapped, recombination intermediate results, with the 5'-ends of the viral DNA strands and the 3' ends of target DNA strands remaining unjoined, flanking a gap of 5 bp. The last step is viral DNA integration into host chromosome. This involves host DNA repair synthesis in which the 5 bp gaps between the unjoined strands are filled in and then ligated. Since this process occurs at both cuts flanking the HIV genome, a 5 bp duplication of host DNA is produced at the ends of HIV-1 integration. Alternatively, Integrase may catalyze the excision of viral DNA just after strand transfer, this is termed disintegration. The sequence is that of Gag-Pol polyprotein (gag-pol) from Homo sapiens (Human).